The primary structure comprises 639 residues: UvrABC system protein C (639 aa).

One can recognise a GIY-YIG domain in the interval 20–97; sequence ERSGVYRMFD…IKKFQPKFNI (78 aa). One can recognise a UVR domain in the interval 207-242; that stretch reads KELQENLSRKMEELSSQMRFEEAAEIRDRIKALSYV.

This sequence belongs to the UvrC family. As to quaternary structure, interacts with UvrB in an incision complex.

The protein resides in the cytoplasm. The UvrABC repair system catalyzes the recognition and processing of DNA lesions. UvrC both incises the 5' and 3' sides of the lesion. The N-terminal half is responsible for the 3' incision and the C-terminal half is responsible for the 5' incision. The polypeptide is UvrABC system protein C (Rickettsia conorii (strain ATCC VR-613 / Malish 7)).